A 954-amino-acid polypeptide reads, in one-letter code: Kinesin-like protein KIN-14A (954 aa).

The 119-residue stretch at 24-142 folds into the Calponin-homology (CH) domain; sequence ALRRHQAATW…CVISLKSYHE (119 aa). A coiled-coil region spans residues 242–293; sequence LSRQLEKEQSSNSQVENRRRLLQAQESELLELKSMFQEVKIDFRTLKTQFQD. Residues 332-651 form the Kinesin motor domain; it reads NIRVFCRIRP…LKFAQRASCV (320 aa). 413–420 contributes to the ATP binding site; sequence GQTGSGKT. Positions 656-692 form a coiled coil; sequence AHANKESNEIRELKEQVENLKRALAAKELEKSSFKLK. Over residues 697-709 the composition is skewed to basic and acidic residues; that stretch reads VRERAKQVPERTP. Disordered stretches follow at residues 697–743, 824–858, and 882–954; these read VRER…TKLN, NLEVGQTDEPSSSAKLEKMTSSNATKKGSHLRKSI, and PAKI…KRWL. Polar residues-rich tracts occupy residues 831–849 and 886–898; these read DEPSSSAKLEKMTSSNATK and ANSTNNDVPSSIT.

It belongs to the TRAFAC class myosin-kinesin ATPase superfamily. Kinesin family. KIN-14 subfamily.

In Oryza sativa subsp. japonica (Rice), this protein is Kinesin-like protein KIN-14A.